We begin with the raw amino-acid sequence, 508 residues long: Phenylalanine--tRNA ligase alpha subunit (508 aa).

Ala2 carries the post-translational modification N-acetylalanine. Thr190 carries the phosphothreonine modification. Residues Ser193 and Ser301 each carry the phosphoserine modification. Lys311 carries the post-translational modification N6-acetyllysine. Residues Thr329, 372-374, and Tyr412 each bind L-phenylalanine; that span reads QIE. Glu414 is a Mg(2+) binding site. Phe438 serves as a coordination point for L-phenylalanine.

This sequence belongs to the class-II aminoacyl-tRNA synthetase family. Phe-tRNA synthetase alpha subunit type 2 subfamily. As to quaternary structure, heterotetramer; dimer of two heterodimers formed by FARSA and FARSB.

The protein resides in the cytoplasm. It catalyses the reaction tRNA(Phe) + L-phenylalanine + ATP = L-phenylalanyl-tRNA(Phe) + AMP + diphosphate + H(+). The chain is Phenylalanine--tRNA ligase alpha subunit (FARSA) from Homo sapiens (Human).